Reading from the N-terminus, the 447-residue chain is Argininosuccinate synthase (447 aa).

ATP-binding positions include 20-28 and Ala46; that span reads AFSGGLDTS. L-citrulline is bound at residue Tyr102. The ATP site is built by Gly132 and Thr134. L-aspartate is bound by residues Thr134, Asn138, and Asp139. Residue Asn138 participates in L-citrulline binding. Asp139 contacts ATP. The L-citrulline site is built by Arg142 and Ser195. Asp197 lines the ATP pocket. Residues Thr204, Glu206, and Glu283 each coordinate L-citrulline.

This sequence belongs to the argininosuccinate synthase family. Type 2 subfamily. Homotetramer.

The protein resides in the cytoplasm. It carries out the reaction L-citrulline + L-aspartate + ATP = 2-(N(omega)-L-arginino)succinate + AMP + diphosphate + H(+). The protein operates within amino-acid biosynthesis; L-arginine biosynthesis; L-arginine from L-ornithine and carbamoyl phosphate: step 2/3. This Neisseria meningitidis serogroup C / serotype 2a (strain ATCC 700532 / DSM 15464 / FAM18) protein is Argininosuccinate synthase.